We begin with the raw amino-acid sequence, 256 residues long: POU domain class 2-associating factor 1 (256 aa).

A disordered region spans residues 1-23; the sequence is MLWQKPTAPEQAPAPPRPYQGVR. Residues 16 to 38 enclose the OCA domain; sequence PRPYQGVRVKEPVKELLRRKRGH.

The protein belongs to the POU2AF family. Interacts with POU2F1/OCT1 and POU2F2/OCT2; the interaction increases POU2F1 and POU2F2 transactivation activity. In terms of processing, ubiquitinated; mediated by SIAH1 or SIAH2 and leading to its subsequent proteasomal degradation.

The protein resides in the nucleus. Its function is as follows. Transcriptional coactivator that specifically associates with either POU2F1/OCT1 or POU2F2/OCT2. It boosts the POU2F1/OCT1 mediated promoter activity and to a lesser extent, that of POU2F2/OCT2. It recognizes the POU domains of POU2F1/OCT1 and POU2F2/OCT2. It is essential for the response of B-cells to antigens and required for the formation of germinal centers. Regulates IL6 expression in B cells as POU2F2/OCT2 coactivator. The protein is POU domain class 2-associating factor 1 (POU2AF1) of Bos taurus (Bovine).